The sequence spans 223 residues: DNA mismatch repair protein MutH (223 aa).

It belongs to the MutH family.

Its subcellular location is the cytoplasm. Functionally, sequence-specific endonuclease that cleaves unmethylated GATC sequences. It is involved in DNA mismatch repair. This Haemophilus influenzae (strain ATCC 51907 / DSM 11121 / KW20 / Rd) protein is DNA mismatch repair protein MutH.